Here is a 54-residue protein sequence, read N- to C-terminus: Photoreceptor disk component PRCD (54 aa).

Residue cysteine 2 is the site of S-palmitoyl cysteine attachment. The tract at residues 25–54 is disordered; the sequence is PEPSDVDGAARGSSLDADPQSSGREKEPLK.

It belongs to the PRCD family. Interacts with RHO/rhodopsin; the interaction promotes PRCD stability. In terms of processing, palmitoylated at Cys-2. Palmitoylation is essential for protein stability and trafficking to the photoreceptor outer segment, but does not appear to be essential for membrane localization. Probably palmitoylated by ZDHHC3. Post-translationally, phosphorylated.

It is found in the cell projection. It localises to the cilium. The protein resides in the photoreceptor outer segment. Its subcellular location is the membrane. The protein localises to the endoplasmic reticulum. It is found in the golgi apparatus. Its function is as follows. Involved in vision. The sequence is that of Photoreceptor disk component PRCD from Homo sapiens (Human).